The primary structure comprises 143 residues: Large ribosomal subunit protein uL11 (143 aa).

Belongs to the universal ribosomal protein uL11 family. Part of the ribosomal stalk of the 50S ribosomal subunit. Interacts with L10 and the large rRNA to form the base of the stalk. L10 forms an elongated spine to which L12 dimers bind in a sequential fashion forming a multimeric L10(L12)X complex. Post-translationally, one or more lysine residues are methylated.

Its function is as follows. Forms part of the ribosomal stalk which helps the ribosome interact with GTP-bound translation factors. In Burkholderia ambifaria (strain MC40-6), this protein is Large ribosomal subunit protein uL11.